The sequence spans 122 residues: Large ribosomal subunit protein uL14 (122 aa).

Belongs to the universal ribosomal protein uL14 family. As to quaternary structure, part of the 50S ribosomal subunit. Forms a cluster with proteins L3 and L19. In the 70S ribosome, L14 and L19 interact and together make contacts with the 16S rRNA in bridges B5 and B8.

Functionally, binds to 23S rRNA. Forms part of two intersubunit bridges in the 70S ribosome. This chain is Large ribosomal subunit protein uL14, found in Erythrobacter litoralis (strain HTCC2594).